A 368-amino-acid chain; its full sequence is Isocitrate dehydrogenase [NAD] subunit 2, mitochondrial (368 aa).

The N-terminal 14 residues, 1-14 (MFRQSIVKQSCRFL), are a transit peptide targeting the mitochondrion. Substrate contacts are provided by Arg118, Arg128, Arg149, and Asp236. Positions 236, 262, and 266 each coordinate Mg(2+).

The protein belongs to the isocitrate and isopropylmalate dehydrogenases family. As to quaternary structure, octamer of two non-identical subunits IDH1 and IDH2. It depends on Mg(2+) as a cofactor. Mn(2+) is required as a cofactor.

Its subcellular location is the mitochondrion. The catalysed reaction is D-threo-isocitrate + NAD(+) = 2-oxoglutarate + CO2 + NADH. Its function is as follows. Performs an essential role in the oxidative function of the citric acid cycle. In Kluyveromyces lactis (strain ATCC 8585 / CBS 2359 / DSM 70799 / NBRC 1267 / NRRL Y-1140 / WM37) (Yeast), this protein is Isocitrate dehydrogenase [NAD] subunit 2, mitochondrial (IDH2).